The following is a 460-amino-acid chain: UDP-N-acetylmuramoyl-tripeptide--D-alanyl-D-alanine ligase (460 aa).

Gly115–Ser121 provides a ligand contact to ATP.

This sequence belongs to the MurCDEF family. MurF subfamily.

The protein resides in the cytoplasm. It carries out the reaction D-alanyl-D-alanine + UDP-N-acetyl-alpha-D-muramoyl-L-alanyl-gamma-D-glutamyl-meso-2,6-diaminopimelate + ATP = UDP-N-acetyl-alpha-D-muramoyl-L-alanyl-gamma-D-glutamyl-meso-2,6-diaminopimeloyl-D-alanyl-D-alanine + ADP + phosphate + H(+). Its pathway is cell wall biogenesis; peptidoglycan biosynthesis. Its function is as follows. Involved in cell wall formation. Catalyzes the final step in the synthesis of UDP-N-acetylmuramoyl-pentapeptide, the precursor of murein. This chain is UDP-N-acetylmuramoyl-tripeptide--D-alanyl-D-alanine ligase, found in Buchnera aphidicola subsp. Baizongia pistaciae (strain Bp).